A 309-amino-acid polypeptide reads, in one-letter code: Haloalkane dehalogenase (309 aa).

The AB hydrolase-1 domain occupies 37-148 (PTVLFLHGNP…FERWEDFHQR (112 aa)). The active-site Nucleophile is D110. Catalysis depends on E134, which acts as the Proton donor. H278 acts as the Proton acceptor in catalysis.

This sequence belongs to the haloalkane dehalogenase family. Type 2 subfamily. Monomer.

The enzyme catalyses 1-haloalkane + H2O = a halide anion + a primary alcohol + H(+). Catalyzes hydrolytic cleavage of carbon-halogen bonds in halogenated aliphatic compounds, leading to the formation of the corresponding primary alcohols, halide ions and protons. The sequence is that of Haloalkane dehalogenase from Mesorhizobium japonicum (strain LMG 29417 / CECT 9101 / MAFF 303099) (Mesorhizobium loti (strain MAFF 303099)).